The following is a 469-amino-acid chain: MKPVIALIGRPNVGKSTLFNQITKSRDALVADFAGLTRDRKYGDATYQNKSFIVVDTGGIGESEGGIDNYMAEQSKTAINEADIIIFVVDARAGLLASDEQIARELRTLGKKIYLVANKVDGVHAEAALVEFYKLGMGEPLQVAASHGRGVQQMLEDVLQDIPEDENPEEHDKDTGLRLAIIGRPNVGKSTLVNRLLGEDRVVAFDQPGTTRDSIYIPFEREGRKYTLIDTAGVRRKGKVDEMIEKFSIVKTLQAMKDAHVVVVVVDAREGIVEQDLHLIGYALEAGRAMVIAINKWDNMSEYDRKQCKLDVERRFDFIPWARIHLISALHGTGVGELYPSIHRAYESANLKVSPAKLTQILNDATDQHQPPTVQGRRIKMRYAHMGGQNPPTIVIHGNKVDKTPADYRRYLENVFRKVYKLEGTPVKIEFKTSENPFEGRKSQVDERTAARRRRYIQKFKKAEKKFKR.

2 consecutive EngA-type G domains span residues 3–166 (PVIA…PEDE) and 177–350 (LRLA…ESAN). GTP is bound by residues 9–16 (GRPNVGKS), 56–60 (DTGGI), 118–121 (NKVD), 183–190 (GRPNVGKS), 230–234 (DTAGV), and 295–298 (NKWD). Residues 351-435 (LKVSPAKLTQ…PVKIEFKTSE (85 aa)) form the KH-like domain.

It belongs to the TRAFAC class TrmE-Era-EngA-EngB-Septin-like GTPase superfamily. EngA (Der) GTPase family. In terms of assembly, associates with the 50S ribosomal subunit.

Its function is as follows. GTPase that plays an essential role in the late steps of ribosome biogenesis. This is GTPase Der from Acinetobacter baumannii (strain ACICU).